A 268-amino-acid chain; its full sequence is MTLQKKIIELLGVKPAIIPEIEIKNCVDFLKKYLVNHVHIKSLIVGVSGGQDSTLTAKLCQMTAETLRKEKNDITYQFIALRLPYGIQYDEKDCQDAIRFIQPDQIFNVNIKKAVLSSEKSLKKSGVIISDYVRGNEKARERMKVQYSIAAMKQGLVVGTGHAAENITGFFTKYGDSGTDINPIAKLNKRQIRLLLKNLNCPKHLYLKKPMADLEDEHPQQDDESVLGVTYDAIDSYLEQKKIDIRSQKIIEALYLNTLHKRNLPITQ.

An ATP-binding site is contributed by 46–53 (GVSGGQDS). Asp-52 provides a ligand contact to Mg(2+). Arg-140 is a binding site for deamido-NAD(+). Position 160 (Thr-160) interacts with ATP. Glu-165 lines the Mg(2+) pocket. Deamido-NAD(+) contacts are provided by Lys-173 and Asp-180. Lys-189 contacts ATP. Residue 260-261 (HK) coordinates deamido-NAD(+).

This sequence belongs to the NAD synthetase family. Homodimer.

It catalyses the reaction deamido-NAD(+) + NH4(+) + ATP = AMP + diphosphate + NAD(+) + H(+). Its pathway is cofactor biosynthesis; NAD(+) biosynthesis; NAD(+) from deamido-NAD(+) (ammonia route): step 1/1. In terms of biological role, catalyzes the ATP-dependent amidation of deamido-NAD to form NAD. Uses ammonia as a nitrogen source. In Buchnera aphidicola subsp. Acyrthosiphon pisum (strain APS) (Acyrthosiphon pisum symbiotic bacterium), this protein is NH(3)-dependent NAD(+) synthetase.